Here is a 226-residue protein sequence, read N- to C-terminus: uncharacterized protein (226 aa).

Residues 121 to 163 are a coiled coil; it reads TVDELIKTIEKELNKVKKSRKNREKKTNEVEEIIEELIEEDDI.

This is an uncharacterized protein from Methanocaldococcus jannaschii (strain ATCC 43067 / DSM 2661 / JAL-1 / JCM 10045 / NBRC 100440) (Methanococcus jannaschii).